A 502-amino-acid chain; its full sequence is Acetylcholine receptor subunit alpha-type unc-63 (502 aa).

An N-terminal signal peptide occupies residues 1–23 (MGPNDHGFAYILIFLLLSPPTHA). Residues 24 to 263 (NRDANRLFED…HLRRKTLFYT (240 aa)) are Extracellular-facing. An N-linked (GlcNAc...) asparagine glycan is attached at asparagine 136. A disulfide bond links cysteine 151 and cysteine 165. The next 3 helical transmembrane spans lie at 264 to 284 (VNLI…FYLP), 293 to 313 (LCIS…EIIP), and 326 to 346 (LLFT…TLNV). Residues 347-470 (HYRSPTTHTM…WKYISVVMDR (124 aa)) are Cytoplasmic-facing. The helical transmembrane segment at 471–491 (IFLITFTFACAFGTVVIIARA) threads the bilayer.

This sequence belongs to the ligand-gated ion channel (TC 1.A.9) family. Acetylcholine receptor (TC 1.A.9.1) subfamily. Component of nicotinic acetylcholine receptor. In muscles, composed of 2 non-alpha subunits lev-1 and unc-29, and 3 alpha subunits unc-38, unc-63 and lev-8. In cholinergic motoneurons, composed of 2 non-alpha subunits acr-2 and acr-3, and 3 alpha subunits unc-38, unc-63 and acr-12. Interacts with lev-10. As to expression, expressed in body wall muscles, in vulval muscles and in neurons.

The protein localises to the postsynaptic cell membrane. It localises to the cell membrane. Functionally, alpha subunit of nicotinic acetylcholine receptor (nAChR). Probably acts in cholinergic motoneurons to regulate presynaptic neurotransmitter release, thereby ensuring normal level of excitation of cholinergic motoneurons during locomotion. Involved in nAChR sensitivity to nicotine and levamisole. The sequence is that of Acetylcholine receptor subunit alpha-type unc-63 (unc-63) from Caenorhabditis elegans.